We begin with the raw amino-acid sequence, 81 residues long: Adipogenin (81 aa).

Residues 16–36 (FLASWLCLPVGLLLFLLIVWL) form a helical membrane-spanning segment.

It belongs to the adipogenin family.

The protein localises to the membrane. It localises to the nucleus. In terms of biological role, plays a role in stimulating adipocyte differentiation and development. The protein is Adipogenin of Sus scrofa (Pig).